A 370-amino-acid chain; its full sequence is Platelet-derived growth factor D (370 aa).

A signal peptide spans 1–18; the sequence is MHRLIFVYTLICANFCSC. Residues 52-170 enclose the CUB domain; that stretch reads RDETIQVKGN…PGFKIYYSLL (119 aa). Cysteine 109 and cysteine 131 are joined by a disulfide. A glycan (N-linked (GlcNAc...) asparagine) is linked at asparagine 276. Intrachain disulfides connect cysteine 302–cysteine 360 and cysteine 306–cysteine 362.

This sequence belongs to the PDGF/VEGF growth factor family. In terms of assembly, homodimer; disulfide-linked. Interacts with PDGFRB homodimers, and with heterodimers formed by PDGFRA and PDGFRB. Post-translationally, activated by proteolytic cleavage. Proteolytic removal of the N-terminal CUB domain releasing the core domain is necessary for unmasking the receptor-binding epitopes of the core domain. Cleavage after Arg-247 or Arg-249 by urokinase plasminogen activator gives rise to the active form. In terms of tissue distribution, expressed at high levels in the heart, pancreas, adrenal gland and ovary and at low levels in placenta, liver, kidney, prostate, testis, small intestine, spleen and colon. In the kidney, expressed by the visceral epithelial cells of the glomeruli. A widespread expression is also seen in the medial smooth muscle cells of arteries and arterioles, as well as in smooth muscle cells of vasa rectae in the medullary area. Expressed in the adventitial connective tissue surrounding the suprarenal artery. In chronic obstructive nephropathy, a persistent expression is seen in glomerular visceral epithelial cells and vascular smooth muscle cells, as well as de novo expression by periglomerular interstitial cells and by some neointimal cells of atherosclerotic vessels. Expression in normal prostate is seen preferentially in the mesenchyme of the gland while expression is increased and more profuse in prostate carcinoma. Expressed in many ovarian, lung, renal and brain cancer-derived cell lines.

It is found in the secreted. Functionally, growth factor that plays an essential role in the regulation of embryonic development, cell proliferation, cell migration, survival and chemotaxis. Potent mitogen for cells of mesenchymal origin. Plays an important role in wound healing. Induces macrophage recruitment, increased interstitial pressure, and blood vessel maturation during angiogenesis. Can initiate events that lead to a mesangial proliferative glomerulonephritis, including influx of monocytes and macrophages and production of extracellular matrix. This is Platelet-derived growth factor D (PDGFD) from Homo sapiens (Human).